Here is a 256-residue protein sequence, read N- to C-terminus: DNA repair protein RecO (256 aa).

This sequence belongs to the RecO family.

In terms of biological role, involved in DNA repair and RecF pathway recombination. The sequence is that of DNA repair protein RecO from Anaeromyxobacter sp. (strain Fw109-5).